The chain runs to 234 residues: uncharacterized protein (234 aa).

The tract at residues 199–234 is disordered; the sequence is DNQNEPLENYSDDNNFSNFDETEHVDDSEMNDDNFI.

This is an uncharacterized protein from Buchnera aphidicola subsp. Schizaphis graminum (strain Sg).